The following is a 174-amino-acid chain: Ferredoxin-2, mitochondrial (174 aa).

A mitochondrion-targeting transit peptide spans 1-43 (MAASMARGVSARVLLRAAGGSWGPRAGHAAVTSRTFGTTGERR). The tract at residues 26 to 52 (AGHAAVTSRTFGTTGERRAGEEAADSP) is disordered. In terms of domain architecture, 2Fe-2S ferredoxin-type spans 59–161 (VNVVFVDRSG…GVEFALPKIT (103 aa)). Positions 96, 102, 105, and 142 each coordinate [2Fe-2S] cluster.

The protein belongs to the adrenodoxin/putidaredoxin family. As to quaternary structure, component of the mitochondrial core iron-sulfur cluster (ISC) complex composed of NFS1, LYRM4, NDUFAB1, ISCU, FXN, and FDX2; this complex is a heterohexamer containing two copies of each monomer. Form a heterodimer complex with NFS1. Interacts (in both their reduced and oxidized states) with the cysteine desulfurase (NFS1:LYRM4) complex; this interaction stimulates cysteine desulfurase activity, and serves as a reductant for Fe-S cluster assembly. It depends on [2Fe-2S] cluster as a cofactor.

The protein resides in the mitochondrion. The protein localises to the mitochondrion matrix. Electron donor, of the core iron-sulfur cluster (ISC) assembly complex, that acts to reduce the persulfide into sulfide during [2Fe-2S] clusters assembly on the scaffolding protein ISCU. The core iron-sulfur cluster (ISC) assembly complex is involved in the de novo synthesis of a [2Fe-2S] cluster, the first step of the mitochondrial iron-sulfur protein biogenesis. This process is initiated by the cysteine desulfurase complex (NFS1:LYRM4:NDUFAB1) that produces persulfide which is delivered on the scaffold protein ISCU in a FXN-dependent manner. Then this complex is stabilized by FDX2 which provides reducing equivalents to accomplish the [2Fe-2S] cluster assembly. Finally, the [2Fe-2S] cluster is transferred from ISCU to chaperone proteins, including HSCB, HSPA9 and GLRX5. Essential for coenzyme Q biosynthesis: together with FDXR, transfers the electrons required for the hydroxylation reaction performed by COQ6. In Mus musculus (Mouse), this protein is Ferredoxin-2, mitochondrial.